Consider the following 270-residue polypeptide: Interleukin-1 beta (270 aa).

A propeptide spanning residues Met-1 to Asp-118 is cleaved from the precursor.

The protein belongs to the IL-1 family. As to quaternary structure, monomer. In its precursor form, weakly interacts with full-length MEFV; the mature cytokine does not interact at all. Interacts with integrins ITGAV:ITGBV and ITGA5:ITGB1; integrin-binding is required for IL1B signaling. Interacts with cargo receptor TMED10; the interaction is direct and is required for the secretion of IL1B mature form. Interacts with HSP90AB1; the interaction facilitates cargo translocation into the ERGIC. Interacts with HSP90B1; the interaction facilitates cargo translocation into the ERGIC.

Its subcellular location is the cytoplasm. The protein resides in the cytosol. It localises to the secreted. The protein localises to the lysosome. It is found in the extracellular exosome. In terms of biological role, potent pro-inflammatory cytokine. Initially discovered as the major endogenous pyrogen, induces prostaglandin synthesis, neutrophil influx and activation, T-cell activation and cytokine production, B-cell activation and antibody production, and fibroblast proliferation and collagen production. Promotes Th17 differentiation of T-cells. Synergizes with IL12/interleukin-12 to induce IFNG synthesis from T-helper 1 (Th1) cells. Plays a role in angiogenesis by inducing VEGF production synergistically with TNF and IL6. Involved in transduction of inflammation downstream of pyroptosis: its mature form is specifically released in the extracellular milieu by passing through the gasdermin-D (GSDMD) pore. The sequence is that of Interleukin-1 beta (IL1B) from Phoca vitulina richardii (Pacific harbor seal).